The primary structure comprises 374 residues: Tuliposide A-converting enzyme b2, amyloplastic (374 aa).

An amyloplast-targeting transit peptide spans Met1–Thr68. The active-site Acyl-ester intermediate is Ser226. Active-site charge relay system residues include Asp316 and His348.

The protein belongs to the AB hydrolase superfamily. Homodimer. Highly expressed in pistil and bulb scales. Lower expression in stem, and barely detected in root, leaf, petal and stamen.

It localises to the plastid. Its subcellular location is the amyloplast. The catalysed reaction is 6-tuliposide A = tulipalin A + D-glucose. Its function is as follows. Lactone-forming carboxylesterases, specifically catalyzing intramolecular transesterification, but not hydrolysis. Involved in the biosynthesis of tulipalins, defensive chemicals that show antimicrobial activities against a broad range of strains of bacteria and fungi. Substrates are 6-tuliposide A &gt; 6-tuliposide B. In Tulipa gesneriana (Garden tulip), this protein is Tuliposide A-converting enzyme b2, amyloplastic (TCEA-B2).